We begin with the raw amino-acid sequence, 226 residues long: 2-C-methyl-D-erythritol 4-phosphate cytidylyltransferase (226 aa).

It belongs to the IspD/TarI cytidylyltransferase family. IspD subfamily.

It catalyses the reaction 2-C-methyl-D-erythritol 4-phosphate + CTP + H(+) = 4-CDP-2-C-methyl-D-erythritol + diphosphate. The protein operates within isoprenoid biosynthesis; isopentenyl diphosphate biosynthesis via DXP pathway; isopentenyl diphosphate from 1-deoxy-D-xylulose 5-phosphate: step 2/6. Catalyzes the formation of 4-diphosphocytidyl-2-C-methyl-D-erythritol from CTP and 2-C-methyl-D-erythritol 4-phosphate (MEP). This is 2-C-methyl-D-erythritol 4-phosphate cytidylyltransferase from Clostridium beijerinckii (strain ATCC 51743 / NCIMB 8052) (Clostridium acetobutylicum).